A 234-amino-acid chain; its full sequence is uncharacterized protein (234 aa).

The interval M1–S23 is disordered.

This is an uncharacterized protein from Caenorhabditis elegans.